Consider the following 423-residue polypeptide: MSSKFMKSAAVLGTATLASLLLVACGSKTADKPADSGSSEVKELTVYVDEGYKSYIEEVAKAYEKEAGVKVTLKTGDALGGLDKLSLDNQSGNVPDVMMAPYDRVGSLGSDGQLSEVKLSDGAKTDDTTKSLVTAANGKVYGAPAVIESLVMYYNKDLVKDAPKTFADLENLAKDSKYAFAGEDGKTTAFLADWTNFYYTYGLLAGNGAYVFGQNGKDAKDIGLANDGSIVGINYAKSWYEKWPKGMQDTEGAGNLIQTQFQEGKTAAIIDGPWKAQAFKDAKVNYGVATIPTLPNGKEYAAFGGGKAWVIPQAVKNLEASQKFVDFLVATEQQKVLYDKTNEIPANTEARSYAEGKNDELTTAVIKQFKNTQPLPNISQMSAVWDPAKNMLFDAVSGQKDAKTAANDAVTLIKETIKQKFGE.

Residues 1-24 (MSSKFMKSAAVLGTATLASLLLVA) form the signal peptide. The N-palmitoyl cysteine moiety is linked to residue Cys-25. Residue Cys-25 is the site of S-diacylglycerol cysteine attachment. Substrate contacts are provided by residues Tyr-52, Asp-77, Asp-83, 103-104 (DR), Glu-148, Asp-193, Asn-196, 251-254 (EGAG), Trp-274, and Lys-307.

The protein belongs to the bacterial solute-binding protein 1 family.

It localises to the cell membrane. Its function is as follows. Part of an ABC transporter complex involved in the uptake of maltodextrins. Binds glycogen-derived linear maltooligosaccharides increasing in size from maltotriose to maltooctaose with the highest affinity for maltotriose. Has a very weak affinity for maltose. Has also a very low affinity for maltotetraitol, indicating that the binding is selective for maltooligosaccharides with an intact reducing end. This Streptococcus pneumoniae serotype 4 (strain ATCC BAA-334 / TIGR4) protein is Maltooligosaccharide ABC transporter solute-binding lipoprotein.